The following is a 571-amino-acid chain: Urease subunit alpha (571 aa).

Residues G129 to F571 enclose the Urease domain. Residues H134, H136, and K217 each contribute to the Ni(2+) site. The residue at position 217 (K217) is an N6-carboxylysine. Substrate is bound at residue H219. Residues H246 and H272 each coordinate Ni(2+). The Proton donor role is filled by H320. D360 is a binding site for Ni(2+).

It belongs to the metallo-dependent hydrolases superfamily. Urease alpha subunit family. As to quaternary structure, heterotrimer of UreA (gamma), UreB (beta) and UreC (alpha) subunits. Three heterotrimers associate to form the active enzyme. Requires Ni cation as cofactor. Post-translationally, carboxylation allows a single lysine to coordinate two nickel ions.

The protein localises to the cytoplasm. The enzyme catalyses urea + 2 H2O + H(+) = hydrogencarbonate + 2 NH4(+). The protein operates within nitrogen metabolism; urea degradation; CO(2) and NH(3) from urea (urease route): step 1/1. This Cupriavidus necator (strain ATCC 17699 / DSM 428 / KCTC 22496 / NCIMB 10442 / H16 / Stanier 337) (Ralstonia eutropha) protein is Urease subunit alpha.